A 457-amino-acid polypeptide reads, in one-letter code: Vasoactive intestinal polypeptide receptor (457 aa).

The signal sequence occupies residues 1–19 (MGLVEVVWWWRWRFGGGGG). Topologically, residues 20–141 (GLVVEVEVWW…KEQTAFYGTV (122 aa)) are extracellular. 3 cysteine pairs are disulfide-bonded: Cys51-Cys73, Cys64-Cys105, and Cys87-Cys122. N-linked (GlcNAc...) asparagine glycosylation is found at Asn59, Asn70, Asn100, and Asn104. The helical transmembrane segment at 142 to 166 (KTGYTIGHTLSLIALTAAMIILCLF) threads the bilayer. Over 167 to 173 (RKLHCTR) the chain is Cytoplasmic. The helical transmembrane segment at 174-193 (NYIHMHLFMSFIMRAIAVFI) threads the bilayer. Residues 194–215 (KDVTLFESGEPEHCFVSSVGCK) lie on the Extracellular side of the membrane. A disulfide bond links Cys214 and Cys284. A helical transmembrane segment spans residues 216–239 (AMMVFFQYCVMANFFWLLVEGLYL). At 240 to 253 (HTLLVISFFSERKY) the chain is on the cytoplasmic side. A helical membrane pass occupies residues 254 to 275 (FWWYILIGWGAPSVFITAWTVV). Topologically, residues 276-292 (RIYFFNVGCWEEIIESP) are extracellular. A helical transmembrane segment spans residues 293 to 316 (IWWIIKTPILVSILVNFILFICII). The Cytoplasmic segment spans residues 317-341 (RILVQKLHSPDVGHNETSQYSRLAK). The chain crosses the membrane as a helical span at residues 342-361 (STLLLIPLFGIHYIMFAFFP). Residues 362–373 (DNFKAQVKLVFE) lie on the Extracellular side of the membrane. The chain crosses the membrane as a helical span at residues 374 to 393 (LVVGSFQGFVVAVLYCFLNG). The Cytoplasmic segment spans residues 394 to 457 (EVQAELKRKW…SSFQAEFSLV (64 aa)).

The protein belongs to the G-protein coupled receptor 2 family. In terms of tissue distribution, expressed in pituitary, hypothalamus, small intestine and ovarian follicles.

It localises to the cell membrane. This is a receptor for VIP. The activity of this receptor is mediated by G proteins which activate adenylyl cyclase. In Meleagris gallopavo (Wild turkey), this protein is Vasoactive intestinal polypeptide receptor (VIPR1).